The sequence spans 647 residues: Auxin efflux carrier component 2 (647 aa).

The Extracellular portion of the chain corresponds to 1 to 7 (MITGKDM). The chain crosses the membrane as a helical span at residues 8–28 (YDVLAAMVPLYVAMILAYGSV). The Cytoplasmic segment spans residues 29–38 (RWWGIFTPDQ). The chain crosses the membrane as a helical span at residues 39 to 59 (CSGINRFVAVFAVPLLSFHFI). Residue V51 coordinates (indol-3-yl)acetate. Over 60-68 (SSNDPYAMN) the chain is Extracellular. A helical membrane pass occupies residues 69-89 (YHFLAADSLQKVVILAALFLW). Over 90-100 (QAFSRRGSLEW) the chain is Cytoplasmic. The chain crosses the membrane as a helical span at residues 101-121 (MITLFSLSTLPNTLVMGIPLL). (indol-3-yl)acetate-binding residues include N112 and L114. The Extracellular portion of the chain corresponds to 122–131 (RAMYGDFSGN). A helical membrane pass occupies residues 132–152 (LMVQIVVLQSIIWYTLMLFLF). Y145 contributes to the (indol-3-yl)acetate binding site. Topologically, residues 153-507 (EFRGAKLLIS…LIRNPNTYSS (355 aa)) are cytoplasmic. Residues S237, S258, and S310 each carry the phosphoserine modification. The segment at 339-380 (SVPSYPPPNPMFTGSTSGASGVKKKESGGGGSGGGVGVGGQN) is disordered. T354 carries the phosphothreonine modification. The span at 366-378 (GGGGSGGGVGVGG) shows a compositional bias: gly residues. S393 is modified (phosphoserine). Disordered stretches follow at residues 397-420 (EANA…KVSI) and 440-481 (PGRK…QQMP). The helical transmembrane segment at 508–528 (LFGLAWSLVSFKWNIKMPTIM) threads the bilayer. Residues 529-531 (SGS) lie on the Extracellular side of the membrane. Residues 532-552 (ISILSDAGLGMAMFSLGLFMA) form a helical membrane-spanning segment. Residues 553-568 (LQPKIIACGKSVAGFA) lie on the Cytoplasmic side of the membrane. A helical membrane pass occupies residues 569–589 (MAVRFLTGPAVIAATSIAIGI). The Extracellular portion of the chain corresponds to 590–592 (RGD). Residues 593–613 (LLHIAIVQAALPQGIVPFVFA) form a helical membrane-spanning segment. (indol-3-yl)acetate-binding residues include I607 and V608. Residues 614–626 (KEYNVHPDILSTA) lie on the Cytoplasmic side of the membrane. The helical transmembrane segment at 627–647 (VIFGMLVALPVTVLYYVLLGL) threads the bilayer.

It belongs to the auxin efflux carrier (TC 2.A.69.1) family. As to quaternary structure, homodimer. Interacts with FYPP1 and FYPP3. Component of a complex made of PINs (e.g. PIN1 and PIN2), MAB4/MELs (e.g. NPY1/MAB4 and NPY5/MEL1) and AGC kinases (e.g. D6PK and PID) at the plasma membrane. Binds directly to NPY1/MAB4, NPY5/MEL1 and PID. In terms of tissue distribution, root-specific. Localized to the cortex, epidermis and lateral root cap, predominantly at the upper side of cells.

The protein resides in the cell membrane. Its function is as follows. Acts as a component of the auxin efflux carrier. Seems to be involved in the root-specific auxin transport, and mediates the root gravitropism. Its particular localization suggests a role in the translocation of auxin towards the elongation zone. Recrutes NPY proteins (e.g. NPY1/MAB4 and NPY5/MEL1) to the plasma membrane in a polar basal localization in root epidermis; this activity is optimized by AGC kinases-mediated (e.g. D6PK and PID) phosphorylation that limits their lateral diffusion-based escape. This chain is Auxin efflux carrier component 2, found in Arabidopsis thaliana (Mouse-ear cress).